A 131-amino-acid polypeptide reads, in one-letter code: UPF0102 protein H16_A3579 (131 aa).

Belongs to the UPF0102 family.

This is UPF0102 protein H16_A3579 from Cupriavidus necator (strain ATCC 17699 / DSM 428 / KCTC 22496 / NCIMB 10442 / H16 / Stanier 337) (Ralstonia eutropha).